Here is a 403-residue protein sequence, read N- to C-terminus: Argininosuccinate synthase (403 aa).

9–17 (AYSGGLDTS) is an ATP binding site. Tyr86 contributes to the L-citrulline binding site. Gly116 lines the ATP pocket. L-aspartate-binding residues include Thr118, Asn122, and Asp123. An L-citrulline-binding site is contributed by Asn122. Residues Arg126, Ser174, Glu259, and Tyr271 each contribute to the L-citrulline site.

It belongs to the argininosuccinate synthase family. Type 1 subfamily. In terms of assembly, homotetramer.

It is found in the cytoplasm. The catalysed reaction is L-citrulline + L-aspartate + ATP = 2-(N(omega)-L-arginino)succinate + AMP + diphosphate + H(+). The protein operates within amino-acid biosynthesis; L-arginine biosynthesis; L-arginine from L-ornithine and carbamoyl phosphate: step 2/3. This is Argininosuccinate synthase from Ligilactobacillus salivarius (strain UCC118) (Lactobacillus salivarius).